The sequence spans 299 residues: Probable lipid kinase YegS (299 aa).

In terms of domain architecture, DAGKc spans 2–133; it reads AEFPASLLIL…IDMAQVNKQT (132 aa). ATP-binding positions include Thr-40, 66–72, and Thr-95; that span reads GDGTINE. Residues Leu-215, Asp-218, and Leu-220 each contribute to the Mg(2+) site. The active-site Proton acceptor is Glu-271.

The protein belongs to the diacylglycerol/lipid kinase family. YegS lipid kinase subfamily. The cofactor is Mg(2+). Ca(2+) is required as a cofactor.

It localises to the cytoplasm. Probably phosphorylates lipids; the in vivo substrate is unknown. The protein is Probable lipid kinase YegS of Escherichia coli O17:K52:H18 (strain UMN026 / ExPEC).